The chain runs to 327 residues: BTB/POZ domain-containing protein KCTD12 (327 aa).

Residues 1 to 28 are disordered; the sequence is MALADSARGLPNGGGGGGGSGSSSSSAE. A2 carries the post-translational modification N-acetylalanine. Positions 11–21 are enriched in gly residues; that stretch reads PNGGGGGGGSG. The residue at position 119 (Y119) is a Phosphotyrosine. Positions 129–204 are disordered; it reads LGAPQQPGPG…PLLTPSQSLD (76 aa). 3 positions are modified to phosphoserine: S153, S173, and S187. A Phosphothreonine modification is found at T198. At S202 the chain carries Phosphoserine.

In terms of assembly, interacts as a tetramer with GABBR1 and GABBR2. Expressed in the brain, mainly in the hippocampus and cerebellum.

It is found in the presynaptic cell membrane. The protein resides in the postsynaptic cell membrane. Auxiliary subunit of GABA-B receptors that determine the pharmacology and kinetics of the receptor response. Increases agonist potency and markedly alter the G-protein signaling of the receptors by accelerating onset and promoting desensitization. The chain is BTB/POZ domain-containing protein KCTD12 (Kctd12) from Mus musculus (Mouse).